Consider the following 260-residue polypeptide: Indole-3-glycerol phosphate synthase (260 aa).

The protein belongs to the TrpC family.

The enzyme catalyses 1-(2-carboxyphenylamino)-1-deoxy-D-ribulose 5-phosphate + H(+) = (1S,2R)-1-C-(indol-3-yl)glycerol 3-phosphate + CO2 + H2O. Its pathway is amino-acid biosynthesis; L-tryptophan biosynthesis; L-tryptophan from chorismate: step 4/5. This chain is Indole-3-glycerol phosphate synthase, found in Staphylococcus aureus (strain MSSA476).